A 365-amino-acid chain; its full sequence is Aminomethyltransferase (365 aa).

Belongs to the GcvT family. In terms of assembly, the glycine cleavage system is composed of four proteins: P, T, L and H.

The catalysed reaction is N(6)-[(R)-S(8)-aminomethyldihydrolipoyl]-L-lysyl-[protein] + (6S)-5,6,7,8-tetrahydrofolate = N(6)-[(R)-dihydrolipoyl]-L-lysyl-[protein] + (6R)-5,10-methylene-5,6,7,8-tetrahydrofolate + NH4(+). Functionally, the glycine cleavage system catalyzes the degradation of glycine. This chain is Aminomethyltransferase, found in Erwinia tasmaniensis (strain DSM 17950 / CFBP 7177 / CIP 109463 / NCPPB 4357 / Et1/99).